A 229-amino-acid polypeptide reads, in one-letter code: V-type proton ATPase subunit E (229 aa).

This sequence belongs to the V-ATPase E subunit family. V-ATPase is a heteromultimeric enzyme composed of a peripheral catalytic V1 complex (components A to H) attached to an integral membrane V0 proton pore complex (components: a, c, c', c'' and d).

Its function is as follows. Subunit of the peripheral V1 complex of vacuolar ATPase essential for assembly or catalytic function. V-ATPase is responsible for acidifying a variety of intracellular compartments in eukaryotic cells. The chain is V-type proton ATPase subunit E (VATE) from Spinacia oleracea (Spinach).